A 93-amino-acid chain; its full sequence is MASEIIVDHQQKAFELLKLDAEKILKLIRVQMDNLTMPQCPLYEEVLDTQMFGLSREIDFAVRLGLVDENDGKELLDRLERELSALHDAFTGK.

Belongs to the UPF0358 family.

This chain is UPF0358 protein RBAM_014700, found in Bacillus velezensis (strain DSM 23117 / BGSC 10A6 / LMG 26770 / FZB42) (Bacillus amyloliquefaciens subsp. plantarum).